The primary structure comprises 290 residues: 4-hydroxybenzoate octaprenyltransferase (290 aa).

8 consecutive transmembrane segments (helical) span residues 24–44 (IGFF…HKGI), 48–68 (VVLI…CIIN), 98–118 (LVAL…LNFI), 142–162 (FPQV…FTAI), 171–191 (WLLF…YAMI), 214–234 (FLIG…GWKE), 239–259 (VFYF…QILI), and 270–290 (AFLS…SSFH).

Belongs to the UbiA prenyltransferase family. Mg(2+) serves as cofactor.

It localises to the cell inner membrane. It catalyses the reaction all-trans-octaprenyl diphosphate + 4-hydroxybenzoate = 4-hydroxy-3-(all-trans-octaprenyl)benzoate + diphosphate. Its pathway is cofactor biosynthesis; ubiquinone biosynthesis. Functionally, catalyzes the prenylation of para-hydroxybenzoate (PHB) with an all-trans polyprenyl group. Mediates the second step in the final reaction sequence of ubiquinone-8 (UQ-8) biosynthesis, which is the condensation of the polyisoprenoid side chain with PHB, generating the first membrane-bound Q intermediate 3-octaprenyl-4-hydroxybenzoate. The sequence is that of 4-hydroxybenzoate octaprenyltransferase from Blochmanniella pennsylvanica (strain BPEN).